We begin with the raw amino-acid sequence, 612 residues long: MVTNKKDTDENRDVQGSIVTKTSAIFPVLVGFRVINSLLTRTYFQADEFWQSLEPAHYKAFGYGELTWEWKVGLRSYAFPMLFEIIYRLVKLLAIASKEALSIICSIGAGLMLLCFPQSKLATEVARDLLTIPNEYSETVEYYGVIYAPKLFMALLAATGEYFTIKLIQKVYLKTVSKNDDQLPKLSNITKIALLLTLTNFFNCFFITRTFINSFEMILTSIALYNWDWSGGIEINTRSFTKSLFFAMFACIQRPSNAIIWIVLGFFLTINLLLRRDYTLIGRLYAKILVVFTITMLVNVVIDFYFYNQIIFPVFKFINFNFTSILSEFYGVAPWHFHLLQSLPIMLGYSLPLFIYGLFSNDSTTKNNIRFGALRQIKFVLILNIIFYSYLKHKEFRFIYPLQPLFCLLSALGALKLAGKVQNYRYLKEYVWIIPLMSMIVSIFITTFQESGVIQVMKDLHNEKDIDSVGFVMPCHSTPWQSYLHRNDIRQLWAISCEPPLHLLGKNNASIELQTYMDESDYLYENISGFIKKNFPKFTNSMDMENVNNNASMPQFPHEWPQFLIIFEQLDNEFMSRYLLDSGYVKYNKIFNSYSHWDSRRNGDLIIYYKNN.

2 helical membrane passes run 92 to 112 (LLAIASKEALSIICSIGAGLM) and 145 to 165 (VIYAPKLFMALLAATGEYFTI). An N-linked (GlcNAc...) asparagine glycan is attached at N188. The next 3 helical transmembrane spans lie at 192–212 (IALLLTLTNFFNCFFITRTFI), 254–274 (RPSNAIIWIVLGFFLTINLLL), and 288–308 (ILVVFTITMLVNVVIDFYFYN). An N-linked (GlcNAc...) asparagine glycan is attached at N321. The chain crosses the membrane as a helical span at residues 339–359 (LLQSLPIMLGYSLPLFIYGLF). N-linked (GlcNAc...) asparagine glycosylation occurs at N361. The next 3 helical transmembrane spans lie at 371–391 (FGALRQIKFVLILNIIFYSYL), 398–418 (FIYPLQPLFCLLSALGALKLA), and 429–449 (EYVWIIPLMSMIVSIFITTFQ). 3 N-linked (GlcNAc...) asparagine glycosylation sites follow: N508, N526, and N550.

This sequence belongs to the glycosyltransferase 22 family. PIGB subfamily.

Its subcellular location is the endoplasmic reticulum membrane. It participates in glycolipid biosynthesis; glycosylphosphatidylinositol-anchor biosynthesis. Mannosyltransferase involved in glycosylphosphatidylinositol-anchor biosynthesis. Transfers the third mannose to Man2-GlcN-acyl-PI during GPI precursor assembly. This Candida glabrata (strain ATCC 2001 / BCRC 20586 / JCM 3761 / NBRC 0622 / NRRL Y-65 / CBS 138) (Yeast) protein is GPI mannosyltransferase 3 (GPI10).